A 176-amino-acid polypeptide reads, in one-letter code: MATKRICVARIGAPHGVRGALKLWPFTEDPLAVLDYGPLTTQDGSRRFEVETAREAKDHLVATLKGVASRDDAVRLNGIELYIDRDQLPETDEGEYYHADLIGLAAVTAAGEPLGKVAAIHNFGAGDIIEIAPPSGPTLLLPFTNAVVPTVDLEGGRVVIEMPGEIEGDTPNHPEA.

The 74-residue stretch at 93–166 (EGEYYHADLI…RVVIEMPGEI (74 aa)) folds into the PRC barrel domain.

It belongs to the RimM family. Binds ribosomal protein uS19.

The protein resides in the cytoplasm. In terms of biological role, an accessory protein needed during the final step in the assembly of 30S ribosomal subunit, possibly for assembly of the head region. Essential for efficient processing of 16S rRNA. May be needed both before and after RbfA during the maturation of 16S rRNA. It has affinity for free ribosomal 30S subunits but not for 70S ribosomes. This chain is Ribosome maturation factor RimM, found in Rhodopseudomonas palustris (strain BisA53).